A 153-amino-acid chain; its full sequence is UPF0756 membrane protein lin1603 (153 aa).

4 helical membrane-spanning segments follow: residues 6–26, 54–74, 80–100, and 117–137; these read MLFLLLFLLLGLIAKNNSLII, WGVTIITVAILIPIATGQIGF, SFKSAAGWIGLGAGIAVSILA, and LVFGTILAVVLFRGIAAGPVI.

The protein belongs to the UPF0756 family.

Its subcellular location is the cell membrane. This chain is UPF0756 membrane protein lin1603, found in Listeria innocua serovar 6a (strain ATCC BAA-680 / CLIP 11262).